We begin with the raw amino-acid sequence, 134 residues long: Inner membrane protein YqjE (134 aa).

Topologically, residues 1-55 (MADTHHAQGPGKSVLGIGQRIVSIMVEMVETRLRLAVVELEEEKANLFQLLLMLG) are cytoplasmic. A helical transmembrane segment spans residues 56 to 76 (LTMLFAAFGLMSLMVLIIWAV). The Periplasmic segment spans residues 77–83 (DPQYRLN). A helical transmembrane segment spans residues 84–104 (AMIATTVVLLLLALIGGIWTL). The Cytoplasmic portion of the chain corresponds to 105-134 (RKSRKSTLLRHTRHELANDRQLLEEESREQ).

The protein resides in the cell inner membrane. The chain is Inner membrane protein YqjE (yqjE) from Escherichia coli O157:H7.